The primary structure comprises 1331 residues: Sodium-dependent transporter bedraggled (1331 aa).

Residues 1-62 (MSSKEQQAAG…QLEHEQFGLS (62 aa)) form a disordered region. Residues 16–25 (NSNAYSSLPP) show a composition bias toward polar residues. Positions 28 to 43 (TGAGCSGAALGSGTGT) are enriched in gly residues. N168 carries an N-linked (GlcNAc...) asparagine glycan. 2 disordered regions span residues 221 to 284 (EPRT…TEPV) and 363 to 473 (QTNA…SASS). Residues 258 to 282 (KTFSCSLRPTSQIASSSGSLETSTE) show a composition bias toward polar residues. The segment covering 369–383 (SSEEPRPRQYGRRLE) has biased composition (basic and acidic residues). Residues 413–436 (LQDTPTHPIMSTCSELSSARSSRM) are compositionally biased toward polar residues. The span at 437 to 453 (PSPVSLPSDSSSSGSSS) shows a compositional bias: low complexity. Polar residues predominate over residues 463–473 (VQTTTMCSASS). 3 consecutive transmembrane segments (helical) span residues 505–525 (LALI…VLTI), 531–551 (FLLQ…WLQM), and 567–587 (ISPI…FLAL). N627 and N631 each carry an N-linked (GlcNAc...) asparagine glycan. 4 helical membrane-spanning segments follow: residues 667–687 (QLAF…CKGL), 696–716 (IIYT…VYVV), 741–761 (TAAT…VIAI), and 778–798 (AILL…LALC). N857 carries N-linked (GlcNAc...) asparagine glycosylation. The helical transmembrane segment at 890 to 910 (WVWAAVAFATFAGFGLAQLCV) threads the bilayer. A glycan (N-linked (GlcNAc...) asparagine) is linked at N921. The next 4 membrane-spanning stretches (helical) occupy residues 926-946 (VLLS…EMGI), 956-976 (LGGS…VFLI), 998-1018 (AFLA…LSVV), and 1044-1064 (MGSL…IIQI). 3 disordered regions span residues 1086–1136 (PEEG…SYTT), 1169–1238 (SLDA…ASTL), and 1256–1275 (VRHR…TLPR). Composition is skewed to polar residues over residues 1097–1115 (ARQT…TTEG) and 1186–1196 (ILTNPAGSSFN). A compositionally biased stretch (low complexity) spans 1197–1209 (ADPSPASSSSPES).

Belongs to the sodium:neurotransmitter symporter (SNF) (TC 2.A.22) family.

It localises to the membrane. Its function is as follows. Putative sodium-dependent transporter which is required for viability, early imaginal disk development and adult motor coordination. Also has a role in the fate commitment of the R3/R4 photoreceptor cells. May function in ommatidial polarity by regulating the activity of the core polarity genes, acting upstream of (or in parallel to) Vang, dsh, pk, stan, and dgo, but downstream or independently of fz. The protein is Sodium-dependent transporter bedraggled of Drosophila melanogaster (Fruit fly).